Consider the following 460-residue polypeptide: A-type ATP synthase subunit B (460 aa).

It belongs to the ATPase alpha/beta chains family. As to quaternary structure, has multiple subunits with at least A(3), B(3), C, D, E, F, H, I and proteolipid K(x).

It localises to the cell membrane. In terms of biological role, component of the A-type ATP synthase that produces ATP from ADP in the presence of a proton gradient across the membrane. The B chain is a regulatory subunit. The protein is A-type ATP synthase subunit B of Methanosarcina acetivorans (strain ATCC 35395 / DSM 2834 / JCM 12185 / C2A).